Here is a 540-residue protein sequence, read N- to C-terminus: [Co(II) methylated amine-specific corrinoid protein] reductase (540 aa).

2 consecutive 4Fe-4S ferredoxin-type domains span residues Ile471–Arg500 and Arg504–Leu535. [4Fe-4S] cluster contacts are provided by Cys480, Cys483, Cys486, Cys490, Cys513, Cys518, Cys521, and Cys525.

In terms of assembly, monomer. [4Fe-4S] cluster is required as a cofactor.

The catalysed reaction is 2 Co(II)-[methylamine-specific corrinoid protein] + AH2 + ATP + H2O = 2 Co(I)-[methylamine-specific corrinoid protein] + A + ADP + phosphate + 3 H(+). It catalyses the reaction 2 Co(II)-[dimethylamine-specific corrinoid protein] + AH2 + ATP + H2O = 2 Co(I)-[dimethylamine-specific corrinoid protein] + A + ADP + phosphate + 3 H(+). The enzyme catalyses 2 Co(II)-[trimethylamine-specific corrinoid protein] + AH2 + ATP + H2O = 2 Co(I)-[trimethylamine-specific corrinoid protein] + A + ADP + phosphate + 3 H(+). The protein operates within one-carbon metabolism; methanogenesis from methylamine. Its pathway is one-carbon metabolism; methanogenesis from dimethylamine. It participates in one-carbon metabolism; methanogenesis from trimethylamine. Its function is as follows. Reductase required for the activation of corrinoid-dependent methylamine methyltransferase reactions during methanogenesis. Mediates the ATP-dependent reduction of corrinoid proteins from the inactive cobalt(II) state to the active cobalt(I) state. Acts on the corrinoid proteins involved in methanogenesis from monomethylamine (MMA), dimethylamine (DMA) and trimethylamine (TMA), namely MtmC, MtbC and MttC, respectively. This chain is [Co(II) methylated amine-specific corrinoid protein] reductase, found in Methanosarcina barkeri.